Here is a 64-residue protein sequence, read N- to C-terminus: Alpha-mammal toxin Lqh2 (64 aa).

Residues 2-64 (KDGYIVDDVN…VRTKGPGRCR (63 aa)) form the LCN-type CS-alpha/beta domain. 4 disulfides stabilise this stretch: Cys-12–Cys-63, Cys-16–Cys-36, Cys-22–Cys-46, and Cys-26–Cys-48. Arg-64 bears the Arginine amide mark.

This sequence belongs to the long (4 C-C) scorpion toxin superfamily. Sodium channel inhibitor family. Alpha subfamily. Expressed by the venom gland.

It is found in the secreted. Alpha toxins bind voltage-independently at site-3 of sodium channels (Nav) and inhibit the inactivation of the activated channels, thereby blocking neuronal transmission. The dissociation is voltage-dependent. Is active on mammals and competes for alpha-toxins binding on both mammalian and cockroach sodium channels. The sequence is that of Alpha-mammal toxin Lqh2 from Leiurus hebraeus (Hebrew deathstalker scorpion).